The following is a 344-amino-acid chain: Dihydroorotase (344 aa).

Residues histidine 14 and histidine 16 each coordinate Zn(2+). Residues 16–18 and asparagine 42 each bind substrate; that span reads HLR. Zn(2+) contacts are provided by lysine 100, histidine 137, and histidine 175. Lysine 100 bears the N6-carboxylysine mark. Residue histidine 137 coordinates substrate. Leucine 220 is a binding site for substrate. Aspartate 248 provides a ligand contact to Zn(2+). Residue aspartate 248 is part of the active site. The substrate site is built by histidine 252 and alanine 264.

This sequence belongs to the metallo-dependent hydrolases superfamily. DHOase family. Class II DHOase subfamily. Homodimer. It depends on Zn(2+) as a cofactor.

It catalyses the reaction (S)-dihydroorotate + H2O = N-carbamoyl-L-aspartate + H(+). It participates in pyrimidine metabolism; UMP biosynthesis via de novo pathway; (S)-dihydroorotate from bicarbonate: step 3/3. Functionally, catalyzes the reversible cyclization of carbamoyl aspartate to dihydroorotate. This Ralstonia pickettii (strain 12J) protein is Dihydroorotase.